A 348-amino-acid polypeptide reads, in one-letter code: tRNA N6-adenosine threonylcarbamoyltransferase (348 aa).

2 residues coordinate Fe cation: histidine 115 and histidine 119. Residues 138–142, aspartate 171, glycine 184, and asparagine 278 each bind substrate; that span reads LVSGG. Aspartate 306 contacts Fe cation.

Belongs to the KAE1 / TsaD family. It depends on Fe(2+) as a cofactor.

Its subcellular location is the cytoplasm. The enzyme catalyses L-threonylcarbamoyladenylate + adenosine(37) in tRNA = N(6)-L-threonylcarbamoyladenosine(37) in tRNA + AMP + H(+). In terms of biological role, required for the formation of a threonylcarbamoyl group on adenosine at position 37 (t(6)A37) in tRNAs that read codons beginning with adenine. Is involved in the transfer of the threonylcarbamoyl moiety of threonylcarbamoyl-AMP (TC-AMP) to the N6 group of A37, together with TsaE and TsaB. TsaD likely plays a direct catalytic role in this reaction. This is tRNA N6-adenosine threonylcarbamoyltransferase from Methylibium petroleiphilum (strain ATCC BAA-1232 / LMG 22953 / PM1).